A 296-amino-acid chain; its full sequence is Polyamine aminopropyltransferase (296 aa).

A PABS domain is found at 16-251 (HLWYFEYYTG…GMWSYTFASK (236 aa)). Q46 provides a ligand contact to S-methyl-5'-thioadenosine. H77 and D101 together coordinate spermidine. S-methyl-5'-thioadenosine contacts are provided by residues E121 and 152–153 (NG). The Proton acceptor role is filled by D170. Position 170 to 173 (170 to 173 (DSTD)) interacts with spermidine.

It belongs to the spermidine/spermine synthase family. Homodimer or homotetramer.

It is found in the cytoplasm. The enzyme catalyses S-adenosyl 3-(methylsulfanyl)propylamine + putrescine = S-methyl-5'-thioadenosine + spermidine + H(+). It functions in the pathway amine and polyamine biosynthesis; spermidine biosynthesis; spermidine from putrescine: step 1/1. Its function is as follows. Catalyzes the irreversible transfer of a propylamine group from the amino donor S-adenosylmethioninamine (decarboxy-AdoMet) to putrescine (1,4-diaminobutane) to yield spermidine. This is Polyamine aminopropyltransferase from Thermotoga neapolitana (strain ATCC 49049 / DSM 4359 / NBRC 107923 / NS-E).